The sequence spans 503 residues: Na(+)-translocating NADH-quinone reductase subunit B (503 aa).

The next 5 helical transmembrane spans lie at 55–75 (MMLV…NSGL), 94–114 (ISGF…VPIL), 120–140 (IFIP…VLFA), 161–181 (TLPP…GIVV), and 186–206 (FGGT…FLFF). Threonine 248 is subject to FMN phosphoryl threonine. 5 helical membrane-spanning segments follow: residues 361 to 381 (TSTF…IASW), 386 to 406 (AFGI…VLIV), 417 to 437 (FFIP…LVFM), 452 to 472 (WIYG…NPAY), and 475 to 495 (GVML…YFAV).

The protein belongs to the NqrB/RnfD family. As to quaternary structure, composed of six subunits; NqrA, NqrB, NqrC, NqrD, NqrE and NqrF. Requires FMN as cofactor.

It is found in the cell inner membrane. The enzyme catalyses a ubiquinone + n Na(+)(in) + NADH + H(+) = a ubiquinol + n Na(+)(out) + NAD(+). NQR complex catalyzes the reduction of ubiquinone-1 to ubiquinol by two successive reactions, coupled with the transport of Na(+) ions from the cytoplasm to the periplasm. NqrA to NqrE are probably involved in the second step, the conversion of ubisemiquinone to ubiquinol. This Chlamydia pneumoniae (Chlamydophila pneumoniae) protein is Na(+)-translocating NADH-quinone reductase subunit B.